The following is a 330-amino-acid chain: MVNIIQPKVDPLPTGIGLTGKTVVITGASAGMGLEATKQLLRLRASTVILAVRNVAKGEACATSLRQDRRIQTHNPKPTIKVMELDVDDYHSVQRFSKQLREEIPVVHILILNAGIGLLKLERSASGHDRTTQVNYYSNVLLIAELLPYLQAGAEKTGSPARISWVGSRAHEVTSLEKKAPIKPGEGVLAHMDKEEAFVPFQRYGDSKLLCVMFMYNLAPRLDPKKVIINMMCPGMVNTNMSDVLPMHLRLIVNVVKSFRARPVEVGGWIILNSALVVGPESHGKFLNDKTISDKSAFIKSPAGQEIQKKLWEETINEIGTLTTLPAELK.

Residues Lys57, Asp86, Asn113, Tyr204, and Lys208 each coordinate NADP(+). Tyr204 acts as the Proton donor in catalysis. Catalysis depends on Lys208, which acts as the Lowers pKa of active site Tyr.

It belongs to the short-chain dehydrogenases/reductases (SDR) family.

It functions in the pathway secondary metabolite biosynthesis; terpenoid biosynthesis. Functionally, short chain dehydrogenase; part of the gene cluster that mediates the biosynthesis of macrophorins, isoprenoid epoxycyclohexenones containing cyclized drimane moieties. The first step of the pathway is the synthesis of 6-methylsalicylic acid (6-MSA) by the polyketide synthase macA. 6-MSA is then converted to m-cresol by the decarboxylase macB. The cytochrome P450 monooxygenase macC then catalyzes the oxidation of m-cresol to toluquinol. Epoxidation of toluquinol is then performed by the short chain dehydrogenase macD, with the help of macE, and a further prenylation by macG leads to 7-deacetoxyyanuthone A. The next step is the hydroxylation of C-22 of 7-deacetoxyyanuthone A by the cytochrome P450 monooxygenase macH to yield 22-deacetylyanuthone A. O-Mevalon transferase macI then attaches mevalon to the hydroxyl group of 22-deacetylyanuthone A to produce yanuthone E. The terpene cyclase macJ catalyzes the cyclization of 22-deacetylyanuthone A to macrophorin A. MacJ is also able to catalyze cyclization of yanuthone E and 7-deacetoxyyanuthone A to their corresponding macrophorins. The macJ products can be further modified by macH and macJ, as well as by the FAD-dependent monooxygenase macF, to produce additional macrophorins, including 4'-oxomacrophorin A, 4'-oxomacrophorin D and 4'-oxomacrophorin E. This is Short chain dehydrogenase macD from Penicillium terrestre.